The following is a 567-amino-acid chain: 25S rRNA (cytosine-C(5))-methyltransferase NSUN5 (567 aa).

Basic residues predominate over residues 1–17 (MVARRNKPKAPLVKHRF). The interval 1 to 88 (MVARRNKPKA…KTPPATKQKF (88 aa)) is disordered. S-adenosyl-L-methionine-binding positions include 312 to 318 (CSAPGNK), Glu336, Asp363, and Asp383. Cys444 acts as the Nucleophile in catalysis.

The protein belongs to the class I-like SAM-binding methyltransferase superfamily. RsmB/NOP family.

The catalysed reaction is a cytidine in 25S rRNA + S-adenosyl-L-methionine = a 5-methylcytidine in 25S rRNA + S-adenosyl-L-homocysteine + H(+). Functionally, S-adenosyl-L-methionine-dependent methyltransferase that specifically methylates the C(5) position of cytosine 2268 (m5C2268) in 25S rRNA. The protein is 25S rRNA (cytosine-C(5))-methyltransferase NSUN5 of Arabidopsis thaliana (Mouse-ear cress).